Consider the following 194-residue polypeptide: Leucyl/phenylalanyl-tRNA--protein transferase (194 aa).

The protein belongs to the L/F-transferase family.

It is found in the cytoplasm. It carries out the reaction N-terminal L-lysyl-[protein] + L-leucyl-tRNA(Leu) = N-terminal L-leucyl-L-lysyl-[protein] + tRNA(Leu) + H(+). The enzyme catalyses N-terminal L-arginyl-[protein] + L-leucyl-tRNA(Leu) = N-terminal L-leucyl-L-arginyl-[protein] + tRNA(Leu) + H(+). The catalysed reaction is L-phenylalanyl-tRNA(Phe) + an N-terminal L-alpha-aminoacyl-[protein] = an N-terminal L-phenylalanyl-L-alpha-aminoacyl-[protein] + tRNA(Phe). Functions in the N-end rule pathway of protein degradation where it conjugates Leu, Phe and, less efficiently, Met from aminoacyl-tRNAs to the N-termini of proteins containing an N-terminal arginine or lysine. The sequence is that of Leucyl/phenylalanyl-tRNA--protein transferase from Chlorobaculum parvum (strain DSM 263 / NCIMB 8327) (Chlorobium vibrioforme subsp. thiosulfatophilum).